A 158-amino-acid polypeptide reads, in one-letter code: Protein NrdI (158 aa).

The protein belongs to the NrdI family.

In terms of biological role, probably involved in ribonucleotide reductase function. This Rhodococcus jostii (strain RHA1) protein is Protein NrdI.